A 484-amino-acid chain; its full sequence is MKLIVKTFQEITIKSRPVRKRFIRQLAKNIRAVLRDLDPELKVEGEWDNLEVETAVVDAKVRREMIERLTCTPGIGHFLEVHEYPLGDFDDILAKCKAHFGDQLAGKTFAVRCKRAGKHAFTSMEVERYVGSGLRRECGAAGIDLKQPEVEVRMEIRLDRLFVIHRQHPGLGGYPLGALEQVLVLMSGGFDSTVAAYQMMRRGMISHFVFFNLGGRAHELGVMEVAHYLWEKYGRSQRVLFISVPFEEVVGEILTKVDDSYMGVTLKRMMLRAASRVAERLELDALVTGEAISQVSSQTLPNLSVIDRVTDTLVLRPLIVSHKQDIIDTARQIGTAEFARHMPEYCGVISVNPTTQAKPYRVEHEESKFDMAVLERALERATQRTVDRVIDELGQDLQVEEVGEVLPGQIVIDIRHPDAQEDEPLALEGVEVQALPFYAINSRFKELDANRQYLLYCDKGVMSRLHAHHLLNEGHTNVRVYRPA.

Residues 63–167 (REMIERLTCT…LDRLFVIHRQ (105 aa)) form the THUMP domain. ATP is bound by residues 185–186 (LM), lysine 267, glycine 289, and glutamine 298. Cysteine 346 and cysteine 457 are joined by a disulfide. The region spanning 405 to 483 (VLPGQIVIDI…GHTNVRVYRP (79 aa)) is the Rhodanese domain. Cysteine 457 functions as the Cysteine persulfide intermediate in the catalytic mechanism.

The protein belongs to the ThiI family.

The protein resides in the cytoplasm. The enzyme catalyses [ThiI sulfur-carrier protein]-S-sulfanyl-L-cysteine + a uridine in tRNA + 2 reduced [2Fe-2S]-[ferredoxin] + ATP + H(+) = [ThiI sulfur-carrier protein]-L-cysteine + a 4-thiouridine in tRNA + 2 oxidized [2Fe-2S]-[ferredoxin] + AMP + diphosphate. It carries out the reaction [ThiS sulfur-carrier protein]-C-terminal Gly-Gly-AMP + S-sulfanyl-L-cysteinyl-[cysteine desulfurase] + AH2 = [ThiS sulfur-carrier protein]-C-terminal-Gly-aminoethanethioate + L-cysteinyl-[cysteine desulfurase] + A + AMP + 2 H(+). Its pathway is cofactor biosynthesis; thiamine diphosphate biosynthesis. Its function is as follows. Catalyzes the ATP-dependent transfer of a sulfur to tRNA to produce 4-thiouridine in position 8 of tRNAs, which functions as a near-UV photosensor. Also catalyzes the transfer of sulfur to the sulfur carrier protein ThiS, forming ThiS-thiocarboxylate. This is a step in the synthesis of thiazole, in the thiamine biosynthesis pathway. The sulfur is donated as persulfide by IscS. The protein is tRNA sulfurtransferase of Pseudomonas aeruginosa (strain UCBPP-PA14).